A 472-amino-acid chain; its full sequence is Membrane-bound lytic murein transglycosylase F (472 aa).

Residues 1–24 form the signal peptide; it reads MRLLVIFLLALLLMACKEAPKPLA. Residues 25–259 form a non-LT domain region; the sequence is DPRTTKEIIV…HLIDRYYGHA (235 aa). An LT domain region spans residues 260–472; the sequence is DRLKPVDVTT…NGFGNTLSQE (213 aa). Residue glutamate 306 is part of the active site.

The protein in the N-terminal section; belongs to the bacterial solute-binding protein 3 family. It in the C-terminal section; belongs to the transglycosylase Slt family.

The protein resides in the cell outer membrane. The enzyme catalyses Exolytic cleavage of the (1-&gt;4)-beta-glycosidic linkage between N-acetylmuramic acid (MurNAc) and N-acetylglucosamine (GlcNAc) residues in peptidoglycan, from either the reducing or the non-reducing ends of the peptidoglycan chains, with concomitant formation of a 1,6-anhydrobond in the MurNAc residue.. Murein-degrading enzyme that degrades murein glycan strands and insoluble, high-molecular weight murein sacculi, with the concomitant formation of a 1,6-anhydromuramoyl product. Lytic transglycosylases (LTs) play an integral role in the metabolism of the peptidoglycan (PG) sacculus. Their lytic action creates space within the PG sacculus to allow for its expansion as well as for the insertion of various structures such as secretion systems and flagella. The sequence is that of Membrane-bound lytic murein transglycosylase F from Methylobacillus flagellatus (strain ATCC 51484 / DSM 6875 / VKM B-1610 / KT).